We begin with the raw amino-acid sequence, 601 residues long: Glutathione-regulated potassium-efflux system protein KefB (601 aa).

13 helical membrane passes run 4–24, 29–49, 55–75, 87–107, 111–131, 152–172, 177–197, 207–227, 230–250, 262–282, 284–304, 324–344, and 356–376; these read ADLL…VPLA, IGAV…GLGF, EILH…GLEL, IFGV…GLLM, FLWQ…TAMA, VLLF…LLAG, HFDW…LIGG, FIAA…LVLS, LFMD…GVLL, AIDP…GMSL, LGVL…LVVI, MQFA…FSTA, and ALLL…MKGI. Positions 400–519 constitute an RCK N-terminal domain; sequence KPQVIVVGFG…AGVTQFSRET (120 aa).

This sequence belongs to the monovalent cation:proton antiporter 2 (CPA2) transporter (TC 2.A.37) family. KefB subfamily. As to quaternary structure, interacts with the regulatory subunit KefG.

It is found in the cell inner membrane. Functionally, pore-forming subunit of a potassium efflux system that confers protection against electrophiles. Catalyzes K(+)/H(+) antiport. The sequence is that of Glutathione-regulated potassium-efflux system protein KefB from Salmonella enteritidis PT4 (strain P125109).